A 766-amino-acid chain; its full sequence is UPF0313 protein PP_4872 (766 aa).

In terms of domain architecture, Radical SAM core spans 371 to 649 (AYEMIRFSVN…KAFLRYHDPK (279 aa)). Residues Cys-385, Cys-389, and Cys-392 each contribute to the [4Fe-4S] cluster site. The disordered stretch occupies residues 670-766 (GKHQLIPLHQ…KKPRQPVIPR (97 aa)). Basic and acidic residues predominate over residues 723-735 (KPWDKREKAKAEA).

Belongs to the UPF0313 family. [4Fe-4S] cluster serves as cofactor.

The protein is UPF0313 protein PP_4872 of Pseudomonas putida (strain ATCC 47054 / DSM 6125 / CFBP 8728 / NCIMB 11950 / KT2440).